Reading from the N-terminus, the 229-residue chain is 1-Cys peroxiredoxin PER1 (229 aa).

The region spanning 4-173 (LTIGDTVPNL…VLRAVDSLLT (170 aa)) is the Thioredoxin domain. The active-site Cysteine sulfenic acid (-SOH) intermediate is cysteine 46. The short motif at 205 to 228 (RKMFPQGFETADLPSKKGYLRFTK) is the Bipartite nuclear localization signal element.

The protein belongs to the peroxiredoxin family. Prx6 subfamily.

It localises to the nucleus. The protein resides in the cytoplasm. It carries out the reaction a hydroperoxide + [thioredoxin]-dithiol = an alcohol + [thioredoxin]-disulfide + H2O. Thiol-specific peroxidase that catalyzes the reduction of hydrogen peroxide and organic hydroperoxides to water and alcohols, respectively. Seems to contribute to the inhibition of germination during stress. The chain is 1-Cys peroxiredoxin PER1 (PER1) from Zea mays (Maize).